Here is a 372-residue protein sequence, read N- to C-terminus: MTVLKTTPLHAAHRALNARMVDFGGWDMPVNYGSQIEEHQAVRTDAGMFDVSHMCVVDFTGPRVRAFFEHAIANNVAKLQTPGKALYSCLLNPQGGVIDDLIVYYFTEEFFRVVVNAGTAEKDIAWFNQLNEQGGFGLTIAPRRDFAIVAAQGPNARAKVWDTVPCARAATSELKPFNAAQVAGTPFGDLTVARTGYTGEDGFEIIVPATHVEALWNALAERGVRPCGLGARDTLRLEAGMNLYGQDMDESVSPLDAGLAWTVDLSAPRAFVGRDALEAHGSRAAFVGLILQKENGRAGGVLRAHQKVATPHGEGEITSGTFSPSMQESIAFARVPKDVAIGDTVHVQIRDKQLPARVVKLPFVRNGKVLAA.

The protein belongs to the GcvT family. In terms of assembly, the glycine cleavage system is composed of four proteins: P, T, L and H.

It carries out the reaction N(6)-[(R)-S(8)-aminomethyldihydrolipoyl]-L-lysyl-[protein] + (6S)-5,6,7,8-tetrahydrofolate = N(6)-[(R)-dihydrolipoyl]-L-lysyl-[protein] + (6R)-5,10-methylene-5,6,7,8-tetrahydrofolate + NH4(+). Functionally, the glycine cleavage system catalyzes the degradation of glycine. The protein is Aminomethyltransferase of Burkholderia mallei (strain NCTC 10247).